Here is a 120-residue protein sequence, read N- to C-terminus: MKRYVCSTFVACVMVLCVIPASGAAAHEAVAEDAGNRIAAPACVHFTADWRYTFVTNDCSIDYSVTVAYGDGTDVPCRSANPGDILTFPGYGTRGNEVLGAVLCATDGSALPVDRERAVR.

The signal sequence occupies residues 1–32; the sequence is MKRYVCSTFVACVMVLCVIPASGAAAHEAVAE. 2 disulfides stabilise this stretch: cysteine 43–cysteine 59 and cysteine 77–cysteine 104.

Inhibits mammalian alpha-amylases specifically but has no action on plant and microbial alpha-amylases. The sequence is that of Alpha-amylase inhibitor Haim-2 from Streptomyces griseosporeus.